The sequence spans 555 residues: Glutamine--tRNA ligase (555 aa).

Residues 35–45 carry the 'HIGH' region motif; it reads PEPNGYLHIGH. Residues 36-38 and 42-48 contribute to the ATP site; these read EPN and HIGHAKS. L-glutamine-binding residues include Asp68 and Tyr213. Residues Thr232 and 262–263 contribute to the ATP site; that span reads RL. Residues 269 to 273 carry the 'KMSKS' region motif; that stretch reads ITSKR.

This sequence belongs to the class-I aminoacyl-tRNA synthetase family. In terms of assembly, monomer.

It is found in the cytoplasm. It catalyses the reaction tRNA(Gln) + L-glutamine + ATP = L-glutaminyl-tRNA(Gln) + AMP + diphosphate. This Azotobacter vinelandii (strain DJ / ATCC BAA-1303) protein is Glutamine--tRNA ligase.